A 398-amino-acid chain; its full sequence is Phosphoglycerate kinase (398 aa).

Substrate-binding positions include 23-25, Arg-38, 61-64, Arg-122, and Arg-155; these read DFN and HLGK. Residues Lys-206, Gly-297, Glu-328, and 354–357 each bind ATP; that span reads GGDS.

It belongs to the phosphoglycerate kinase family. In terms of assembly, monomer.

It localises to the cytoplasm. It catalyses the reaction (2R)-3-phosphoglycerate + ATP = (2R)-3-phospho-glyceroyl phosphate + ADP. The protein operates within carbohydrate degradation; glycolysis; pyruvate from D-glyceraldehyde 3-phosphate: step 2/5. This chain is Phosphoglycerate kinase, found in Clostridium novyi (strain NT).